Here is a 191-residue protein sequence, read N- to C-terminus: Large ribosomal subunit protein bL9 (191 aa).

The disordered stretch occupies residues 150 to 191 (EAERQAKGESLTSADAIYGVDEDALRPEDFFDPDADRDGDDE). A compositionally biased stretch (acidic residues) spans 179 to 191 (FFDPDADRDGDDE).

Belongs to the bacterial ribosomal protein bL9 family.

Binds to the 23S rRNA. The protein is Large ribosomal subunit protein bL9 of Allorhizobium ampelinum (strain ATCC BAA-846 / DSM 112012 / S4) (Agrobacterium vitis (strain S4)).